The primary structure comprises 189 residues: Protein Rex (189 aa).

Residues 1–16 are compositionally biased toward basic residues; that stretch reads MPKTRRRPRRSQRKRP. Positions 1–27 are disordered; that stretch reads MPKTRRRPRRSQRKRPPTPWPTSQGLD. A Nuclear localization signal, and RNA-binding (RxRE) motif is present at residues 2–18; it reads PKTRRRPRRSQRKRPPT. Residues 56 to 70 are homomultimerization; that stretch reads RPAYIVTPYWPPVQS. Position 70 is a phosphoserine; by host (Ser70). The Nuclear export signal motif lies at 82-93; sequence LSAQLYSSLSLD. Positions 87-189 are disordered; sequence YSSLSLDSPP…PPSPGPSCPM (103 aa). The segment covering 105 to 114 has biased composition (low complexity); the sequence is PLRSLPRQSL. Positions 123 to 131 are homomultimerization; sequence PSSRPCANT. A compositionally biased stretch (polar residues) spans 143–164; it reads LGSTSQPCLFQTPDSGPKTCTP. Thr174 is subject to Phosphothreonine; by host. Residue Ser177 is modified to Phosphoserine; by host. Residues 178-189 are compositionally biased toward pro residues; the sequence is FPPPSPGPSCPM.

This sequence belongs to the deltaretrovirus Rex protein family. In terms of assembly, homomultimer. Multimeric assembly is essential for activity and involves XPO1. Binds to human XPO1 and KPNB1. Interacts (via N-terminal nuclear localization signal) with human NPM1. Phosphorylated.

The protein localises to the host nucleus. It is found in the host nucleolus. Its subcellular location is the host cytoplasm. Its function is as follows. Rex escorts unspliced gag-pro-pol and singly spliced env mRNAs out of the nucleus of infected cells. These mRNAs carry a recognition sequence called Rex responsive element (RxRE or XRE) located at the 3' region of the long terminal repeat (LTR). This function is essential since most HTLV proteins are translated from unspliced or partially spliced pre-mRNAs that cannot exit the nucleus by the pathway used by fully processed cellular mRNAs. Rex itself is translated from a fully spliced mRNA that probably readily exits the nucleus. Rex's nuclear localization signal (NLS) binds directly to KPNB1/importin beta-1 without previous binding to KPNA1/importin alpha-1. KPNB1 binds to the GDP bound form of RAN (Ran-GDP) and targets Rex to the nucleus. In the nucleus, the conversion from Ran-GDP to Ran-GTP dissociates Rex from KPNB1 and allows Rex's binding to the RRE in viral pre-mRNAs. Rex multimerizes on the RRE via cooperative assembly. This multimerization is critical for its full biological activity, since it may shield the viral RNA from being spliced or down-regulated, and probably exposes Rex's nuclear export signal (NES) to the surface. Rex can then form a complex with XPO1/CRM1, RANBP3 and Ran-GTP, leading to nuclear export of the complex. Conversion from Ran-GTP to Ran-GDP mediates dissociation of the Rex/RRE/XPO1/RANBP3/RAN complex, so that Rex can return to the nucleus for a subsequent round of export. This is Protein Rex from Human T-cell leukemia virus 1 (isolate Caribbea HS-35 subtype A) (HTLV-1).